A 98-amino-acid chain; its full sequence is Large ribosomal subunit protein uL23 (98 aa).

This sequence belongs to the universal ribosomal protein uL23 family. As to quaternary structure, part of the 50S ribosomal subunit. Contacts protein L29, and trigger factor when it is bound to the ribosome.

Functionally, one of the early assembly proteins it binds 23S rRNA. One of the proteins that surrounds the polypeptide exit tunnel on the outside of the ribosome. Forms the main docking site for trigger factor binding to the ribosome. The protein is Large ribosomal subunit protein uL23 of Methylorubrum populi (strain ATCC BAA-705 / NCIMB 13946 / BJ001) (Methylobacterium populi).